Reading from the N-terminus, the 94-residue chain is Evasin P1172 (94 aa).

3 cysteine pairs are disulfide-bonded: Cys35-Cys54, Cys39-Cys56, and Cys50-Cys67. Asn38, Asn44, Asn53, and Asn80 each carry an N-linked (GlcNAc...) asparagine glycan.

It is found in the secreted. Its function is as follows. Salivary chemokine-binding protein which binds to host chemokines CXCL1, CXCL2, CXCL5 and CXCL8. The sequence is that of Evasin P1172 from Ixodes ricinus (Common tick).